A 185-amino-acid polypeptide reads, in one-letter code: Shikimate kinase (185 aa).

12–17 (GSGKTT) serves as a coordination point for ATP. Threonine 16 provides a ligand contact to Mg(2+). Substrate contacts are provided by aspartate 34, arginine 58, and glycine 79. Residue arginine 116 participates in ATP binding. Arginine 135 lines the substrate pocket.

This sequence belongs to the shikimate kinase family. In terms of assembly, monomer. Mg(2+) serves as cofactor.

The protein resides in the cytoplasm. It catalyses the reaction shikimate + ATP = 3-phosphoshikimate + ADP + H(+). It functions in the pathway metabolic intermediate biosynthesis; chorismate biosynthesis; chorismate from D-erythrose 4-phosphate and phosphoenolpyruvate: step 5/7. Catalyzes the specific phosphorylation of the 3-hydroxyl group of shikimic acid using ATP as a cosubstrate. The polypeptide is Shikimate kinase (Corynebacterium jeikeium (strain K411)).